Reading from the N-terminus, the 124-residue chain is U-scoloptoxin-Er5d (124 aa).

Residues 1–22 (MKTNCEFPLLCLLIVLVANVEG) form the signal peptide. Residues 23-94 (EVEDNELKMV…KRLWRNWERR (72 aa)) constitute a propeptide that is removed on maturation. RLWRNWE repeat units lie at residues 34-40 (RLWRNWE), 61-67 (RLWRNWE), and 86-92 (RLWRNWE). At Gln-95 the chain carries Pyrrolidone carboxylic acid. Residues 107–113 (ELWRNWE) form an RLWRNWE 4; approximate repeat. Positions 112-124 (WEDLKRRQVGRFE) are excised as a propeptide.

The protein belongs to the scoloptoxin-08 family. As to expression, expressed by the venom gland.

Its subcellular location is the secreted. The chain is U-scoloptoxin-Er5d from Ethmostigmus rubripes (Giant centipede).